Consider the following 427-residue polypeptide: Chitin disaccharide deacetylase (427 aa).

Positions 1–22 are cleaved as a signal peptide; the sequence is MKLNKLAIATLVSAALSQYAFA. In terms of domain architecture, NodB homology spans 28–326; sequence GTIYLTFDDG…LAKQAGYVFD (299 aa). 2 consecutive Chitin-binding type-3 domains span residues 333 to 375 and 382 to 419; these read PNWQ…SSLW and TNWT…TPNS.

It belongs to the polysaccharide deacetylase family. Carbohydrate-binding module 12 subfamily.

It carries out the reaction N,N'-diacetylchitobiose + H2O = N-acetyl-beta-D-glucosaminyl-(1-&gt;4)-D-glucosamine + acetate. It participates in glycan degradation; chitin degradation. Its function is as follows. Specifically catalyzes the degradation of N,N'-diacetylchitobiose. Key enzyme in the chitin catabolic cascade. In Vibrio alginolyticus, this protein is Chitin disaccharide deacetylase (deaA).